The primary structure comprises 487 residues: Glutamyl-tRNA(Gln) amidotransferase subunit A (487 aa).

Active-site charge relay system residues include Lys-79 and Ser-158. Catalysis depends on Ser-182, which acts as the Acyl-ester intermediate.

The protein belongs to the amidase family. GatA subfamily. Heterotrimer of A, B and C subunits.

It carries out the reaction L-glutamyl-tRNA(Gln) + L-glutamine + ATP + H2O = L-glutaminyl-tRNA(Gln) + L-glutamate + ADP + phosphate + H(+). Allows the formation of correctly charged Gln-tRNA(Gln) through the transamidation of misacylated Glu-tRNA(Gln) in organisms which lack glutaminyl-tRNA synthetase. The reaction takes place in the presence of glutamine and ATP through an activated gamma-phospho-Glu-tRNA(Gln). The protein is Glutamyl-tRNA(Gln) amidotransferase subunit A of Ehrlichia ruminantium (strain Gardel).